Reading from the N-terminus, the 492-residue chain is Bifunctional protein GlmU (492 aa).

The tract at residues 1–241 (MIPENTGPAA…RWQVEGANDR (241 aa)) is pyrophosphorylase. UDP-N-acetyl-alpha-D-glucosamine is bound by residues 14–17 (LAAG), Lys28, Gln81, 86–87 (GT), 112–114 (YGD), Gly151, Glu166, Asn181, and Asn239. Residue Asp114 participates in Mg(2+) binding. Residue Asn239 participates in Mg(2+) binding. The segment at 242-262 (VQLAALGAELNRRTVEAWMRA) is linker. Residues 263–492 (GVTVVDPSTT…STPASTEEGK (230 aa)) form an N-acetyltransferase region. Arg344 and Lys362 together coordinate UDP-N-acetyl-alpha-D-glucosamine. The Proton acceptor role is filled by His374. Residues Tyr377 and Asn388 each contribute to the UDP-N-acetyl-alpha-D-glucosamine site. Acetyl-CoA is bound by residues 397–398 (NY), Ser416, and Ala434. The disordered stretch occupies residues 460-492 (WVPANRPGSRSAELAQAAINNSSSTPASTEEGK). Residues 477-492 (AINNSSSTPASTEEGK) show a composition bias toward polar residues.

This sequence in the N-terminal section; belongs to the N-acetylglucosamine-1-phosphate uridyltransferase family. It in the C-terminal section; belongs to the transferase hexapeptide repeat family. In terms of assembly, homotrimer. The cofactor is Mg(2+).

Its subcellular location is the cytoplasm. It catalyses the reaction alpha-D-glucosamine 1-phosphate + acetyl-CoA = N-acetyl-alpha-D-glucosamine 1-phosphate + CoA + H(+). The enzyme catalyses N-acetyl-alpha-D-glucosamine 1-phosphate + UTP + H(+) = UDP-N-acetyl-alpha-D-glucosamine + diphosphate. The protein operates within nucleotide-sugar biosynthesis; UDP-N-acetyl-alpha-D-glucosamine biosynthesis; N-acetyl-alpha-D-glucosamine 1-phosphate from alpha-D-glucosamine 6-phosphate (route II): step 2/2. It functions in the pathway nucleotide-sugar biosynthesis; UDP-N-acetyl-alpha-D-glucosamine biosynthesis; UDP-N-acetyl-alpha-D-glucosamine from N-acetyl-alpha-D-glucosamine 1-phosphate: step 1/1. It participates in bacterial outer membrane biogenesis; LPS lipid A biosynthesis. Its function is as follows. Catalyzes the last two sequential reactions in the de novo biosynthetic pathway for UDP-N-acetylglucosamine (UDP-GlcNAc). The C-terminal domain catalyzes the transfer of acetyl group from acetyl coenzyme A to glucosamine-1-phosphate (GlcN-1-P) to produce N-acetylglucosamine-1-phosphate (GlcNAc-1-P), which is converted into UDP-GlcNAc by the transfer of uridine 5-monophosphate (from uridine 5-triphosphate), a reaction catalyzed by the N-terminal domain. The sequence is that of Bifunctional protein GlmU from Pseudarthrobacter chlorophenolicus (strain ATCC 700700 / DSM 12829 / CIP 107037 / JCM 12360 / KCTC 9906 / NCIMB 13794 / A6) (Arthrobacter chlorophenolicus).